The chain runs to 496 residues: Tyrosine-protein kinase Srms (496 aa).

The SH3 domain occupies 55-116 (PRARLFRALY…PVTYLAKATP (62 aa)). Residues 124–216 (WYFSGISRAQ…LIQNPLLQPC (93 aa)) form the SH2 domain. The region spanning 234–495 (FVLRRKLGEG…AINRRLHLGL (262 aa)) is the Protein kinase domain. ATP contacts are provided by residues 240 to 248 (LGEGFFGEV) and lysine 262. Aspartate 354 (proton acceptor) is an active-site residue. Tyrosine 384 carries the post-translational modification Phosphotyrosine; by autocatalysis.

Belongs to the protein kinase superfamily. Tyr protein kinase family. SRC subfamily. As to quaternary structure, interacts (via the SH2 and SH3 domains) with DOK1. Interacts with KHDRBS1/SAM68 and VIM. As to expression, higher expression in liver, lung, thymus and skin than in brain, kidney, heart and spleen. In skin, highly expressed in keratinocytes. Abundant in lung, liver, spleen, kidney and testis and is also detected in the cerebrum.

The protein localises to the cytoplasm. The catalysed reaction is L-tyrosyl-[protein] + ATP = O-phospho-L-tyrosyl-[protein] + ADP + H(+). Functionally, non-receptor tyrosine-protein kinase which phosphorylates DOK1 on tyrosine residues. Also phosphorylates KHDRBS1/SAM68 and VIM on tyrosine residues. Phosphorylation of KHDRBS1 is EGF-dependent. Phosphorylates OTUB1, promoting deubiquitination of RPTOR. This chain is Tyrosine-protein kinase Srms (Srms), found in Mus musculus (Mouse).